The primary structure comprises 224 residues: Cytidylate kinase (224 aa).

11–19 lines the ATP pocket; the sequence is GPAAAGKST.

The protein belongs to the cytidylate kinase family. Type 1 subfamily.

The protein resides in the cytoplasm. It carries out the reaction CMP + ATP = CDP + ADP. The enzyme catalyses dCMP + ATP = dCDP + ADP. In Listeria monocytogenes serovar 1/2a (strain ATCC BAA-679 / EGD-e), this protein is Cytidylate kinase.